The primary structure comprises 231 residues: DNA mismatch repair protein MutH (231 aa).

The protein belongs to the MutH family.

The protein resides in the cytoplasm. In terms of biological role, sequence-specific endonuclease that cleaves unmethylated GATC sequences. It is involved in DNA mismatch repair. This chain is DNA mismatch repair protein MutH, found in Klebsiella pneumoniae subsp. pneumoniae (strain ATCC 700721 / MGH 78578).